We begin with the raw amino-acid sequence, 863 residues long: Ribosomal protein S6 kinase alpha-5 (863 aa).

Over residues 1–21 (MEGEGGGSGGAGTSGDSGDGG) the composition is skewed to gly residues. The tract at residues 1-22 (MEGEGGGSGGAGTSGDSGDGGE) is disordered. In terms of domain architecture, Protein kinase 1 spans 48–317 (FELLKVLGTG…AEEIKEHLFF (270 aa)). ATP-binding positions include 54-62 (LGTGAYGKV) and lysine 80. The active-site Proton acceptor is the aspartate 176. Serine 211 is modified (phosphoserine; by autocatalysis). An AGC-kinase C-terminal domain is found at 318 to 386 (EKIKWDDLAA…VAPSILFKRN (69 aa)). Residue serine 359 is modified to Phosphoserine; by MAPK1, MAPK3 and MAPK14. 2 positions are modified to phosphoserine; by autocatalysis: serine 375 and serine 380. Residues 428 to 675 (DKPLGEGSFS…SCDLWSLGVI (248 aa)) form the Protein kinase 2 domain. ATP contacts are provided by residues 431–440 (LGEGSFSICR) and lysine 454. Aspartate 608 serves as the catalytic Proton acceptor. At threonine 645 the chain carries Phosphothreonine; by MAPK1, MAPK3 and MAPK14. A phosphoserine mark is found at serine 711, serine 721, serine 755, and serine 759. Threonine 764 carries the phosphothreonine modification. A disordered region spans residues 805 to 863 (AKRRKMKRTSTSTETRSSSSESSRSSSSQSHGKTTPTKTLQPSNPTEGSNPDTLFQFSD). A compositionally biased stretch (low complexity) spans 813–832 (TSTSTETRSSSSESSRSSSS). Serine 814, serine 816, and serine 822 each carry phosphoserine; by autocatalysis. Residues 833–863 (QSHGKTTPTKTLQPSNPTEGSNPDTLFQFSD) show a composition bias toward polar residues. A Phosphoserine modification is found at serine 862.

It belongs to the protein kinase superfamily. AGC Ser/Thr protein kinase family. S6 kinase subfamily. In terms of assembly, forms a complex with either MAPK1/ERK2 or MAPK3/ERK1 in quiescent cells which transiently dissociates following mitogenic stimulation. Also associates with MAPK14/p38-alpha. Activated RPS6KA5 associates with and phosphorylates the NF-kappa-B p65 subunit RELA. Interacts with CREBBP and EP300. Mg(2+) is required as a cofactor. Post-translationally, ser-375 and Thr-645 phosphorylation is required for kinase activity. Ser-375 and Ser-211 are autophosphorylated by the C-terminal kinase domain, and their phosphorylation is essential for the catalytic activity of the N-terminal kinase domain. Phosphorylated at Ser-359, Thr-645 and Thr-764 by MAPK1/ERK2, MAPK3/ERK1 and MAPK14/p38-alpha. Autophosphorylated at Ser-814, Ser-816 and Ser-822 by the N-terminal kinase domain. Ubiquitinated.

Its subcellular location is the nucleus. It carries out the reaction L-seryl-[protein] + ATP = O-phospho-L-seryl-[protein] + ADP + H(+). The enzyme catalyses L-threonyl-[protein] + ATP = O-phospho-L-threonyl-[protein] + ADP + H(+). Activated by phosphorylation at Ser-359, Thr-645 and Thr-764 by MAPK1/ERK2, MAPK3/ERK1 and MAPK14/p38-alpha, and by further autophosphorylation of Ser-211, Ser-375 and Ser-380 by the activated C-terminal kinase domain. The active N-terminal kinase domain finally phosphorylates downstream substrates, as well as Ser-814, Ser-816 and Ser-822 in its own C-terminal region. In terms of biological role, serine/threonine-protein kinase that is required for the mitogen or stress-induced phosphorylation of the transcription factors CREB1 and ATF1 and for the regulation of the transcription factors RELA, STAT3 and ETV1/ER81, and that contributes to gene activation by histone phosphorylation and functions in the regulation of inflammatory genes. Phosphorylates CREB1 and ATF1 in response to mitogenic or stress stimuli such as UV-C irradiation, epidermal growth factor (EGF) and anisomycin. Plays an essential role in the control of RELA transcriptional activity in response to TNF and upon glucocorticoid, associates in the cytoplasm with the glucocorticoid receptor NR3C1 and contributes to RELA inhibition and repression of inflammatory gene expression. In skeletal myoblasts is required for phosphorylation of RELA at 'Ser-276' during oxidative stress. In erythropoietin-stimulated cells, is necessary for the 'Ser-727' phosphorylation of STAT3 and regulation of its transcriptional potential. Phosphorylates ETV1/ER81 at 'Ser-191' and 'Ser-216', and thereby regulates its ability to stimulate transcription, which may be important during development and breast tumor formation. Directly represses transcription via phosphorylation of 'Ser-1' of histone H2A. Phosphorylates 'Ser-10' of histone H3 in response to mitogenics, stress stimuli and EGF, which results in the transcriptional activation of several immediate early genes, including proto-oncogenes c-fos/FOS and c-jun/JUN. May also phosphorylate 'Ser-28' of histone H3. Mediates the mitogen- and stress-induced phosphorylation of high mobility group protein 1 (HMGN1/HMG14). In lipopolysaccharide-stimulated primary macrophages, acts downstream of the Toll-like receptor TLR4 to limit the production of pro-inflammatory cytokines. Functions probably by inducing transcription of the MAP kinase phosphatase DUSP1 and the anti-inflammatory cytokine interleukin 10 (IL10), via CREB1 and ATF1 transcription factors. Plays a role in neuronal cell death by mediating the downstream effects of excitotoxic injury. Phosphorylates TRIM7 at 'Ser-106' in response to growth factor signaling via the MEK/ERK pathway, thereby stimulating its ubiquitin ligase activity. This Mus musculus (Mouse) protein is Ribosomal protein S6 kinase alpha-5 (Rps6ka5).